The sequence spans 242 residues: Ubiquinone biosynthesis O-methyltransferase (242 aa).

S-adenosyl-L-methionine contacts are provided by arginine 44, glycine 64, aspartate 85, and methionine 129.

Belongs to the methyltransferase superfamily. UbiG/COQ3 family.

The catalysed reaction is a 3-demethylubiquinol + S-adenosyl-L-methionine = a ubiquinol + S-adenosyl-L-homocysteine + H(+). It carries out the reaction a 3-(all-trans-polyprenyl)benzene-1,2-diol + S-adenosyl-L-methionine = a 2-methoxy-6-(all-trans-polyprenyl)phenol + S-adenosyl-L-homocysteine + H(+). Its pathway is cofactor biosynthesis; ubiquinone biosynthesis. O-methyltransferase that catalyzes the 2 O-methylation steps in the ubiquinone biosynthetic pathway. The chain is Ubiquinone biosynthesis O-methyltransferase from Salmonella arizonae (strain ATCC BAA-731 / CDC346-86 / RSK2980).